We begin with the raw amino-acid sequence, 370 residues long: Histidinol-phosphate aminotransferase 1 (370 aa).

Position 222 is an N6-(pyridoxal phosphate)lysine (Lys-222).

It belongs to the class-II pyridoxal-phosphate-dependent aminotransferase family. Histidinol-phosphate aminotransferase subfamily. As to quaternary structure, homodimer. Pyridoxal 5'-phosphate is required as a cofactor.

The enzyme catalyses L-histidinol phosphate + 2-oxoglutarate = 3-(imidazol-4-yl)-2-oxopropyl phosphate + L-glutamate. The protein operates within amino-acid biosynthesis; L-histidine biosynthesis; L-histidine from 5-phospho-alpha-D-ribose 1-diphosphate: step 7/9. The chain is Histidinol-phosphate aminotransferase 1 (hisC1) from Bacillus anthracis.